The following is a 338-amino-acid chain: Putative peptide import ATP-binding protein BOV_A0348 (338 aa).

One can recognise an ABC transporter domain in the interval 10 to 263; that stretch reads KGLRTVFRTR…PRHPYTMGLL (254 aa). Position 43–50 (43–50) interacts with ATP; the sequence is GESGSGKS.

It belongs to the ABC transporter superfamily. In terms of assembly, the complex is composed of two ATP-binding proteins (BOV_A0347 and BOV_A0348), two transmembrane proteins (BOV_A0350 and BOV_A0351) and a solute-binding protein (BOV_A0352).

It localises to the cell inner membrane. Functionally, probably part of an ABC transporter complex that could be involved in peptide import. Probably responsible for energy coupling to the transport system. This chain is Putative peptide import ATP-binding protein BOV_A0348, found in Brucella ovis (strain ATCC 25840 / 63/290 / NCTC 10512).